Here is a 436-residue protein sequence, read N- to C-terminus: Gamma-glutamyl phosphate reductase (436 aa).

The protein belongs to the gamma-glutamyl phosphate reductase family.

It localises to the cytoplasm. It carries out the reaction L-glutamate 5-semialdehyde + phosphate + NADP(+) = L-glutamyl 5-phosphate + NADPH + H(+). Its pathway is amino-acid biosynthesis; L-proline biosynthesis; L-glutamate 5-semialdehyde from L-glutamate: step 2/2. Catalyzes the NADPH-dependent reduction of L-glutamate 5-phosphate into L-glutamate 5-semialdehyde and phosphate. The product spontaneously undergoes cyclization to form 1-pyrroline-5-carboxylate. The protein is Gamma-glutamyl phosphate reductase of Prochlorococcus marinus (strain MIT 9215).